A 122-amino-acid polypeptide reads, in one-letter code: Large ribosomal subunit protein uL14 (122 aa).

Belongs to the universal ribosomal protein uL14 family. In terms of assembly, part of the 50S ribosomal subunit. Forms a cluster with proteins L3 and L19. In the 70S ribosome, L14 and L19 interact and together make contacts with the 16S rRNA in bridges B5 and B8.

Binds to 23S rRNA. Forms part of two intersubunit bridges in the 70S ribosome. The chain is Large ribosomal subunit protein uL14 from Caldicellulosiruptor saccharolyticus (strain ATCC 43494 / DSM 8903 / Tp8T 6331).